Consider the following 98-residue polypeptide: UPF0251 protein Sputcn32_0687 (98 aa).

This sequence belongs to the UPF0251 family.

This chain is UPF0251 protein Sputcn32_0687, found in Shewanella putrefaciens (strain CN-32 / ATCC BAA-453).